A 1295-amino-acid polypeptide reads, in one-letter code: Phosphoribosylformylglycinamidine synthase (1295 aa).

The disordered stretch occupies residues 305 to 327 (WPGAATGSGGEIRDEGATGRGAK). Residues 307–318 (GAATGSGGEIRD), 386–388 (TGY), and Ala-678 each bind ATP. Mg(2+) contacts are provided by Asp-679, Glu-718, Asn-722, and Asp-884. Ser-886 is a binding site for ATP. One can recognise a Glutamine amidotransferase type-1 domain in the interval 1042–1295 (VAVLREQGVN…IFRNARKQLG (254 aa)). The active-site Nucleophile is Cys-1135. Catalysis depends on residues His-1260 and Glu-1262.

It in the N-terminal section; belongs to the FGAMS family. As to quaternary structure, monomer.

The protein resides in the cytoplasm. The catalysed reaction is N(2)-formyl-N(1)-(5-phospho-beta-D-ribosyl)glycinamide + L-glutamine + ATP + H2O = 2-formamido-N(1)-(5-O-phospho-beta-D-ribosyl)acetamidine + L-glutamate + ADP + phosphate + H(+). It functions in the pathway purine metabolism; IMP biosynthesis via de novo pathway; 5-amino-1-(5-phospho-D-ribosyl)imidazole from N(2)-formyl-N(1)-(5-phospho-D-ribosyl)glycinamide: step 1/2. Its function is as follows. Phosphoribosylformylglycinamidine synthase involved in the purines biosynthetic pathway. Catalyzes the ATP-dependent conversion of formylglycinamide ribonucleotide (FGAR) and glutamine to yield formylglycinamidine ribonucleotide (FGAM) and glutamate. This Salmonella paratyphi A (strain ATCC 9150 / SARB42) protein is Phosphoribosylformylglycinamidine synthase.